The primary structure comprises 1142 residues: MAPCGRVRSRCPGPALLLLLALAARPALAGPPAAALQAGPGLNAAGQPAQGAAPGAAGPRGARGGGGGSGGGWKLSEEAVCREDVVRLCSKHSWANNLAVLECLQDVREPDNEISSDCNHLLWNYKLNLTTDPKFESVAREVCKSTIAEIKECADEPVGKGFLVSCLVDHRGNITEYQCHQYITKMTAIIFSDYRLICGFMDDCKADINLLKCGSIRPGEKDAHSQGEVVACLEKGLVKEAEENDPRVQVSDQCKKAILRVAELSSDDFHLDRHLYFACRDDRERFCENTQAGEGRVYKCLFNHKFEESMSEKCRDALTTRQKLIAQDYKVSYSLAKSCKSDLKKYRCNVENLPRSREARLSYLLMCLESAVHRGRQVSSECQGEMLDYRRMLMEDFSLSPEIILSCRGEIEHHCSGLHRKGRTLHCLMKVVRGEKGNVGLNCQQALQTLIQETDPGADYRIDRALNEACESVIQTACKHIRSGDPMILSCLMEHLYTEKMVEDCEHRLLELQYFISRDWKLDVVLYRKCQGDASRLCHTHGWNETSELMPPGAVFSCLYRHAYRTEEQGRRLSRECRAEVQRILHQRAMDVKLDPALQDKCMIDLGKWCSEKTETGQELECLQDHLDDLVSDCRDIVGNLTELESEDIQIEALLMRACEPIIQTFCHEVADNQIDSGDLMECLIQNKHQKEMNEKCAIGVTHFQLVQMKDFRFSYKFKMACKEDVLKLCPNIKKKVDVVICLSTTVRNDTLQDAKEHRVSLKCRKQLRVEELEMTEDIRLEPELYEACKSDIKNYCQNVPYGNAQIIECLKEIKKQLSTRCHQKVFKLQETEMMDPELDYTLMRVCKQMIKRFCPEADSKNMLQCLKQNKNSEVMDPKCKQMITKRQITQNTDYRLNPVLRKACKADIPKFCQNILNRAKDDTELEGQVISCLKLKYADQRLSPDCEDQIRVIIQESALDYRLDPQLQMHCSEEISSLCAEEAAAQEQTGQVEECLKVNLLKIKTEMCKKEVLNMLKESKADIFVDPVLHTACALDIKHHCAAIPPGRGRQMSCLMEALEDKRVRLQPECKKRLNDRIEMWSYAAKVAPAEGFSDLAMQVMTSPSKNYILSVITVGICVLFLIGLMCGRITKRVTRELKDR.

An N-terminal signal peptide occupies residues 1-29 (MAPCGRVRSRCPGPALLLLLALAARPALA). The Extracellular segment spans residues 30-1108 (GPPAAALQAG…MQVMTSPSKN (1079 aa)). The segment covering 45 to 60 (AGQPAQGAAPGAAGPR) has biased composition (low complexity). Residues 45 to 69 (AGQPAQGAAPGAAGPRGARGGGGGS) are disordered. 16 Cys-rich GLG1 repeats span residues 81–112 (CREDVVRLCSKHSWANNLAVLECLQDVREPDN), 113–175 (EISS…GNIT), 178–241 (QCHQ…VKEA), 249–309 (QVSD…FEES), 310–376 (MSEK…HRGR), 377–436 (QVSS…RGEK), 438–500 (NVGL…YTEK), 501–567 (MVED…YRTE), 572–631 (RLSR…DDLV), 633–691 (DCRD…KHQK), 692–751 (EMNE…RNDT), 759–819 (RVSL…KQLS), 821–874 (RCHQ…KNSE), 875–942 (VMDP…ADQR), 943–998 (LSPD…ECLK), and 1004–1064 (IKTE…EDKR). 2 N-linked (GlcNAc...) asparagine glycosylation sites follow: Asn-128 and Asn-173. Asn-544 carries an N-linked (GlcNAc...) asparagine glycan. Asn-640 and Asn-749 each carry an N-linked (GlcNAc...) asparagine glycan. The helical transmembrane segment at 1109 to 1129 (YILSVITVGICVLFLIGLMCG) threads the bilayer. Residues 1130 to 1142 (RITKRVTRELKDR) are Cytoplasmic-facing.

In terms of processing, fucosylation is essential for binding to E-selectin. Post-translationally, N-glycosylated. Contains sialic acid residues.

It is found in the golgi apparatus membrane. The protein resides in the golgi outpost. The protein localises to the cytoplasm. It localises to the cytoskeleton. Its subcellular location is the microtubule organizing center. Binds fibroblast growth factor and E-selectin (cell-adhesion lectin on endothelial cells mediating the binding of neutrophils). Binds fibroblast growth factor (FGF). May be involved in intracellular FGF trafficking and the regulation of cellular responses to FGFS. In Gallus gallus (Chicken), this protein is Golgi apparatus protein 1 (GLG1).